Here is a 451-residue protein sequence, read N- to C-terminus: Gamma-aminobutyric acid receptor subunit alpha-2 (451 aa).

The first 28 residues, 1–28 (MRTKLSTCNVWFPLLVLLVWNPARLVLA), serve as a signal peptide directing secretion. Residues 29-249 (NIQEDEAKNN…MTAHFHLKRK (221 aa)) lie on the Extracellular side of the membrane. N-linked (GlcNAc...) asparagine glycosylation is present at Asn38. Residue Arg94 coordinates 4-aminobutanoate. Asn114 and Asn138 each carry an N-linked (GlcNAc...) asparagine glycan. A 4-aminobutanoate-binding site is contributed by Thr157. A disulfide bond links Cys166 and Cys180. The next 3 helical transmembrane spans lie at 250 to 270 (IGYFVIQTYLPCIMTVILSQV), 281 to 300 (ARTVFGVTTVLTMTTLSISA), and 312 to 332 (AMDWFIAVCYAFVFSALIEFA). The Cytoplasmic segment spans residues 333–420 (TVNYFTKRGW…FNSVSKIDRM (88 aa)). Residues 389–408 (KSATTPEPNKKPENKPAEAK) form a disordered region. Residues 396 to 408 (PNKKPENKPAEAK) show a composition bias toward basic and acidic residues. Residues 421-441 (SRIVFPVLFGTFNLVYWATYL) form a helical membrane-spanning segment. Topologically, residues 442-451 (NREPVLGVSP) are extracellular.

Belongs to the ligand-gated ion channel (TC 1.A.9) family. Gamma-aminobutyric acid receptor (TC 1.A.9.5) subfamily. GABRA2 sub-subfamily. As to quaternary structure, heteropentamer, formed by a combination of alpha (GABRA1-6), beta (GABRB1-3), gamma (GABRG1-3), delta (GABRD), epsilon (GABRE), rho (GABRR1-3), pi (GABRP) and theta (GABRQ) subunits, each subunit exhibiting distinct physiological and pharmacological properties. Binds UBQLN1. Interacts with KIF21B. Interacts with LHFPL4. Interacts with SHISA7; interaction leads to the regulation of GABA(A) receptor trafficking, channel deactivation kinetics and pharmacology. Glycosylated. In terms of tissue distribution, expressed in brain (at protein level).

The protein localises to the postsynaptic cell membrane. It localises to the cell membrane. Its subcellular location is the cytoplasmic vesicle membrane. The protein resides in the cell projection. It is found in the dendrite. The enzyme catalyses chloride(in) = chloride(out). Its activity is regulated as follows. Activated by pentobarbital. Inhibited by the antagonist bicuculline. In terms of biological role, alpha subunit of the heteropentameric ligand-gated chloride channel gated by gamma-aminobutyric acid (GABA), a major inhibitory neurotransmitter in the brain. GABA-gated chloride channels, also named GABA(A) receptors (GABAAR), consist of five subunits arranged around a central pore and contain GABA active binding site(s) located at the alpha and beta subunit interface(s). When activated by GABA, GABAARs selectively allow the flow of chloride anions across the cell membrane down their electrochemical gradient. Chloride influx into the postsynaptic neuron following GABAAR opening decreases the neuron ability to generate a new action potential, thereby reducing nerve transmission. The alpha-2 subunit exhibits synaptogenic activity together with beta-2 and very little to no activity together with beta-3, the gamma-2 subunit being necessary but not sufficient to induce rapid synaptic contacts formation. In Rattus norvegicus (Rat), this protein is Gamma-aminobutyric acid receptor subunit alpha-2.